Consider the following 575-residue polypeptide: Adenine deaminase (575 aa).

It belongs to the metallo-dependent hydrolases superfamily. Adenine deaminase family. It depends on Mn(2+) as a cofactor.

The catalysed reaction is adenine + H2O + H(+) = hypoxanthine + NH4(+). In Nitratidesulfovibrio vulgaris (strain DP4) (Desulfovibrio vulgaris), this protein is Adenine deaminase.